The following is a 493-amino-acid chain: Probable cytosol aminopeptidase (493 aa).

Residues Lys260 and Asp265 each contribute to the Mn(2+) site. The active site involves Lys272. Residues Asp284, Asp343, and Glu345 each contribute to the Mn(2+) site. The active site involves Arg347.

Belongs to the peptidase M17 family. The cofactor is Mn(2+).

The protein resides in the cytoplasm. The enzyme catalyses Release of an N-terminal amino acid, Xaa-|-Yaa-, in which Xaa is preferably Leu, but may be other amino acids including Pro although not Arg or Lys, and Yaa may be Pro. Amino acid amides and methyl esters are also readily hydrolyzed, but rates on arylamides are exceedingly low.. It catalyses the reaction Release of an N-terminal amino acid, preferentially leucine, but not glutamic or aspartic acids.. Its function is as follows. Presumably involved in the processing and regular turnover of intracellular proteins. Catalyzes the removal of unsubstituted N-terminal amino acids from various peptides. The chain is Probable cytosol aminopeptidase from Nostoc punctiforme (strain ATCC 29133 / PCC 73102).